The sequence spans 352 residues: Glutamine synthetase cytosolic isozyme (352 aa).

Positions 19 to 98 constitute a GS beta-grasp domain; it reads FIAEYIWIDA…VMCDTYTPAG (80 aa). The 248-residue stretch at 105 to 352 folds into the GS catalytic domain; that stretch reads KRCNAAKIFS…TSMIAETTIL (248 aa).

This sequence belongs to the glutamine synthetase family. In terms of assembly, homooctamer.

The protein resides in the cytoplasm. It carries out the reaction L-glutamate + NH4(+) + ATP = L-glutamine + ADP + phosphate + H(+). The sequence is that of Glutamine synthetase cytosolic isozyme (GLN1) from Daucus carota (Wild carrot).